Reading from the N-terminus, the 285-residue chain is Protein pxr1 (285 aa).

Basic residues predominate over residues 1-11 (MGLAAPRKKIK). Residues 1 to 23 (MGLAAPRKKIKISHDPNNTNWSR) are disordered. Positions 25–79 (TSGFGHKILSSQGWTPGSFLGARNAAHAEMFTAASASHIKVVLKDDTLGLGARPK) constitute a G-patch domain. Residues 144–263 (TPIVTEEPQG…MGRHVFRGRH (120 aa)) are disordered. Residues 152-163 (QGIHKDKQEDKL) show a composition bias toward basic and acidic residues. The segment covering 190-208 (KKKKSKSKNHREKKDRKRK) has biased composition (basic residues). A compositionally biased stretch (basic and acidic residues) spans 224-234 (RSTEKKSKATR). Basic residues predominate over residues 254–263 (MGRHVFRGRH).

The protein belongs to the PINX1 family.

Its subcellular location is the nucleus. The protein resides in the nucleolus. Functionally, involved in rRNA-processing at A0, A1 and A2 sites and negatively regulates telomerase. This is Protein pxr1 (pxr1) from Aspergillus niger (strain ATCC MYA-4892 / CBS 513.88 / FGSC A1513).